The following is a 206-amino-acid chain: LexA repressor (206 aa).

Residues 28-48 (RAEIATRLGFKSANAAEEHLK) constitute a DNA-binding region (H-T-H motif). Catalysis depends on for autocatalytic cleavage activity residues Ser-123 and Lys-160.

It belongs to the peptidase S24 family. As to quaternary structure, homodimer.

The enzyme catalyses Hydrolysis of Ala-|-Gly bond in repressor LexA.. Its function is as follows. Represses a number of genes involved in the response to DNA damage (SOS response), including recA and lexA. In the presence of single-stranded DNA, RecA interacts with LexA causing an autocatalytic cleavage which disrupts the DNA-binding part of LexA, leading to derepression of the SOS regulon and eventually DNA repair. The chain is LexA repressor from Shewanella putrefaciens (strain CN-32 / ATCC BAA-453).